We begin with the raw amino-acid sequence, 129 residues long: Chromatin accessibility complex protein 1 (129 aa).

Ala2 is subject to N-acetylalanine. Lys102 bears the N6-acetyllysine mark. Residues 104-120 (LKMLKEKREEEEDNEDD) adopt a coiled-coil conformation. The segment at 109-129 (EKREEEEDNEDDGSDLGEALA) is disordered. Positions 112 to 123 (EEEEDNEDDGSD) are enriched in acidic residues. At Ser122 the chain carries Phosphoserine.

In terms of assembly, heterodimer with POLE3; binds to DNA. Component of the CHRAC ISWI chromatin remodeling complex at least composed of SMARCA5/SNF2H, BAZ1A/ACF1, CHRAC1 and POLE3; the complex preferentially binds DNA through the CHRAC1-POLE3 heterodimer and possesses ATP-dependent nucleosome-remodeling activity. Within the complex, the heterodimer with POLE3 interacts with SMARCA5/SNF2H; the interaction is direct and enhances nucleosome sliding activity by the SMARCA5/SNF2H and BAZ1A/ACF1 interaction. Within the complex, the heterodimer with POLE3 interacts with BAZ1A/ACF1; the interactions are direct. In terms of tissue distribution, ubiquitously expressed.

The protein localises to the nucleus. Functionally, forms a complex with DNA polymerase epsilon subunit POLE3 and binds naked DNA, which is then incorporated into chromatin, aided by the nucleosome remodeling activity of ISWI/SNF2H and ACF1. Does not enhance nucleosome sliding activity of the ACF-5 ISWI chromatin remodeling complex. The polypeptide is Chromatin accessibility complex protein 1 (Chrac1) (Mus musculus (Mouse)).